We begin with the raw amino-acid sequence, 479 residues long: Ribosomal RNA small subunit methyltransferase F (479 aa).

Residues 125-131 (AAAPGSK), E149, D176, and D194 contribute to the S-adenosyl-L-methionine site. Catalysis depends on C247, which acts as the Nucleophile.

The protein belongs to the class I-like SAM-binding methyltransferase superfamily. RsmB/NOP family.

The protein resides in the cytoplasm. It catalyses the reaction cytidine(1407) in 16S rRNA + S-adenosyl-L-methionine = 5-methylcytidine(1407) in 16S rRNA + S-adenosyl-L-homocysteine + H(+). Its function is as follows. Specifically methylates the cytosine at position 1407 (m5C1407) of 16S rRNA. The polypeptide is Ribosomal RNA small subunit methyltransferase F (Escherichia coli O127:H6 (strain E2348/69 / EPEC)).